A 369-amino-acid polypeptide reads, in one-letter code: Ubiquitin-conjugating enzyme E2 Q2 (369 aa).

The interval 117–143 (DQPLPTGQNGTTEEVTSEEEEEEEMAE) is disordered. The segment covering 131–143 (VTSEEEEEEEMAE) has biased composition (acidic residues). A UBC core domain is found at 198 to 362 (QASDRLMKEL…VQIHEKNGWY (165 aa)). C298 (glycyl thioester intermediate) is an active-site residue.

This sequence belongs to the ubiquitin-conjugating enzyme family. In terms of processing, auto-ubiquitinated in vitro. Detected at embryo implantation sites in the luminal epithelium of pregnant endometrium. Detected at low levels in ovary and liver.

It is found in the cytoplasm. It carries out the reaction S-ubiquitinyl-[E1 ubiquitin-activating enzyme]-L-cysteine + [E2 ubiquitin-conjugating enzyme]-L-cysteine = [E1 ubiquitin-activating enzyme]-L-cysteine + S-ubiquitinyl-[E2 ubiquitin-conjugating enzyme]-L-cysteine.. It participates in protein modification; protein ubiquitination. Its function is as follows. Accepts ubiquitin from the E1 complex and catalyzes its covalent attachment to other proteins. In vitro catalyzes 'Lys-48'-linked polyubiquitination. The protein is Ubiquitin-conjugating enzyme E2 Q2 (UBE2Q2) of Oryctolagus cuniculus (Rabbit).